A 220-amino-acid chain; its full sequence is Ribosomal RNA small subunit methyltransferase Nep1 (220 aa).

Residues Gly-178, Gly-183, and 196-201 (LYREPL) contribute to the S-adenosyl-L-methionine site.

It belongs to the class IV-like SAM-binding methyltransferase superfamily. RNA methyltransferase NEP1 family. Homodimer.

The enzyme catalyses a pseudouridine in rRNA + S-adenosyl-L-methionine = an N(1)-methylpseudouridine in rRNA + S-adenosyl-L-homocysteine + H(+). In terms of biological role, methyltransferase involved in ribosomal biogenesis. Specifically catalyzes the N1-methylation of the pseudouridine corresponding to position 914 in M.jannaschii 16S rRNA. The sequence is that of Ribosomal RNA small subunit methyltransferase Nep1 from Thermococcus kodakarensis (strain ATCC BAA-918 / JCM 12380 / KOD1) (Pyrococcus kodakaraensis (strain KOD1)).